A 154-amino-acid chain; its full sequence is Myoglobin (154 aa).

The Globin domain maps to 2-148; sequence GLSDGEWQLV…FRKDIAAKYK (147 aa). A Phosphoserine modification is found at S4. H65 is a binding site for nitrite. H65 is a binding site for O2. At T68 the chain carries Phosphothreonine. H94 serves as a coordination point for heme b.

It belongs to the globin family. Monomeric.

It localises to the cytoplasm. The protein localises to the sarcoplasm. The enzyme catalyses Fe(III)-heme b-[protein] + nitric oxide + H2O = Fe(II)-heme b-[protein] + nitrite + 2 H(+). The catalysed reaction is H2O2 + AH2 = A + 2 H2O. Its function is as follows. Monomeric heme protein which primary function is to store oxygen and facilitate its diffusion within muscle tissues. Reversibly binds oxygen through a pentacoordinated heme iron and enables its timely and efficient release as needed during periods of heightened demand. Depending on the oxidative conditions of tissues and cells, and in addition to its ability to bind oxygen, it also has a nitrite reductase activity whereby it regulates the production of bioactive nitric oxide. Under stress conditions, like hypoxia and anoxia, it also protects cells against reactive oxygen species thanks to its pseudoperoxidase activity. In Peponocephala electra (Melon-headed whale), this protein is Myoglobin (MB).